A 47-amino-acid polypeptide reads, in one-letter code: Photosystem II reaction center protein K (47 aa).

The propeptide occupies 1-10 (MALINFDLLA). The chain crosses the membrane as a helical span at residues 26–46 (LPLIPLFFFLLVFVWQAAVGF).

This sequence belongs to the PsbK family. In terms of assembly, PSII is composed of 1 copy each of membrane proteins PsbA, PsbB, PsbC, PsbD, PsbE, PsbF, PsbH, PsbI, PsbJ, PsbK, PsbL, PsbM, PsbT, PsbX, PsbY, Psb30/Ycf12, peripheral proteins PsbO, CyanoQ (PsbQ), PsbU, PsbV and a large number of cofactors. It forms dimeric complexes.

It localises to the cellular thylakoid membrane. One of the components of the core complex of photosystem II (PSII). PSII is a light-driven water:plastoquinone oxidoreductase that uses light energy to abstract electrons from H(2)O, generating O(2) and a proton gradient subsequently used for ATP formation. It consists of a core antenna complex that captures photons, and an electron transfer chain that converts photonic excitation into a charge separation. The chain is Photosystem II reaction center protein K from Prochlorococcus marinus (strain NATL2A).